Here is a 306-residue protein sequence, read N- to C-terminus: Agmatinase (306 aa).

Residues H128, D151, H153, D155, D232, and D234 each contribute to the Mn(2+) site.

Belongs to the arginase family. Agmatinase subfamily. Requires Mn(2+) as cofactor.

The catalysed reaction is agmatine + H2O = urea + putrescine. Its pathway is amine and polyamine biosynthesis; putrescine biosynthesis via agmatine pathway; putrescine from agmatine: step 1/1. In terms of biological role, catalyzes the formation of putrescine from agmatine. This Proteus mirabilis protein is Agmatinase (speB).